We begin with the raw amino-acid sequence, 304 residues long: Porphobilinogen deaminase (304 aa).

S-(dipyrrolylmethanemethyl)cysteine is present on cysteine 240.

The protein belongs to the HMBS family. As to quaternary structure, monomer. It depends on dipyrromethane as a cofactor.

The enzyme catalyses 4 porphobilinogen + H2O = hydroxymethylbilane + 4 NH4(+). It functions in the pathway porphyrin-containing compound metabolism; protoporphyrin-IX biosynthesis; coproporphyrinogen-III from 5-aminolevulinate: step 2/4. Its function is as follows. Tetrapolymerization of the monopyrrole PBG into the hydroxymethylbilane pre-uroporphyrinogen in several discrete steps. This is Porphobilinogen deaminase from Xanthomonas euvesicatoria pv. vesicatoria (strain 85-10) (Xanthomonas campestris pv. vesicatoria).